The sequence spans 834 residues: Striatin-interacting protein 2 (834 aa).

Residues Met-1–Cys-48 are disordered. The segment covering Gly-8–Gly-24 has biased composition (gly residues). The segment covering Lys-30–Glu-43 has biased composition (basic and acidic residues). Residues Ser-318, Ser-329, and Ser-354 each carry the phosphoserine modification. The disordered stretch occupies residues Ser-321–Arg-345. Positions Glu-360–Glu-382 are disordered. Residues Pro-369 to Gly-379 are compositionally biased toward acidic residues.

This sequence belongs to the STRIP family. As to quaternary structure, part of the core of STRIPAK complexes composed of PP2A catalytic and scaffolding subunits, the striatins (PP2A regulatory subunits), the striatin-associated proteins MOB4, STRIP1 and STRIP2, PDCD10 and members of the STE20 kinases, such as STK24 and STK26. Interacts with CTTNBP2NL.

Its subcellular location is the cytoplasm. Plays a role in the regulation of cell morphology and cytoskeletal organization. Required in the control of cell shape. Calmodulin-binding scaffolding protein which is the center of the striatin-interacting phosphatase and kinase (STRIPAK) complexes. STRIPAK complexes have critical roles in protein (de)phosphorylation and are regulators of multiple signaling pathways including Hippo, MAPK, nuclear receptor and cytoskeleton remodeling. Different types of STRIPAK complexes are involved in a variety of biological processes such as cell growth, differentiation, apoptosis, metabolism and immune regulation. The sequence is that of Striatin-interacting protein 2 from Homo sapiens (Human).